Consider the following 788-residue polypeptide: Auxin response factor 4 (788 aa).

The segment covering methionine 1–aspartate 19 has biased composition (acidic residues). The interval methionine 1–serine 53 is disordered. Low complexity predominate over residues serine 38–serine 53. The TF-B3 DNA-binding region spans phenylalanine 177–alanine 279. Positions leucine 413–proline 433 are disordered. Residues arginine 665–lysine 747 enclose the PB1 domain.

The protein belongs to the ARF family. In terms of assembly, homodimers and heterodimers. In terms of tissue distribution, expressed in the whole plant.

It localises to the nucleus. Functionally, auxin response factors (ARFs) are transcriptional factors that bind specifically to the DNA sequence 5'-TGTCTC-3' found in the auxin-responsive promoter elements (AuxREs). Could act as transcriptional activator or repressor. Formation of heterodimers with Aux/IAA proteins may alter their ability to modulate early auxin response genes expression. This Arabidopsis thaliana (Mouse-ear cress) protein is Auxin response factor 4 (ARF4).